The chain runs to 81 residues: Probable antimicrobial peptide Con13 (81 aa).

A signal peptide spans methionine 1–alanine 22. Positions glutamate 66 to serine 81 are excised as a propeptide.

Belongs to the non-disulfide-bridged peptide (NDBP) superfamily. Long chain multifunctional peptide (group 2) family. Expressed by the venom gland.

The protein resides in the secreted. Its subcellular location is the target cell membrane. Its function is as follows. At high concentrations, acts as a pore former in cellular membranes and causes the leakage of the cells. At submicromolar concentrations, degranulates granulocytes and has a weak hemolytic activity against human erythrocytes. Also strongly inhibits the production of superoxide anions. Has a strong antibacterial activity against Gram-negative bacteria but is less active against Gram-positive bacteria. Also has antifungal activity. This Opisthacanthus cayaporum (South American scorpion) protein is Probable antimicrobial peptide Con13.